A 61-amino-acid chain; its full sequence is Progonadoliberin-1 (61 aa).

The residue at position 1 (glutamine 1) is a Pyrrolidone carboxylic acid. Glycine 10 is subject to Glycine amide.

The protein belongs to the GnRH family.

Its subcellular location is the secreted. In terms of biological role, stimulates the secretion of gonadotropins; it stimulates the secretion of both luteinizing and follicle-stimulating hormones. The polypeptide is Progonadoliberin-1 (GNRH1) (Ovis aries (Sheep)).